A 305-amino-acid polypeptide reads, in one-letter code: tRNA dimethylallyltransferase (305 aa).

9-16 (GPTAVGKT) lines the ATP pocket. Residue 11 to 16 (TAVGKT) participates in substrate binding. Residues 34–37 (DSRQ) form an interaction with substrate tRNA region.

The protein belongs to the IPP transferase family. In terms of assembly, monomer. Mg(2+) is required as a cofactor.

The enzyme catalyses adenosine(37) in tRNA + dimethylallyl diphosphate = N(6)-dimethylallyladenosine(37) in tRNA + diphosphate. In terms of biological role, catalyzes the transfer of a dimethylallyl group onto the adenine at position 37 in tRNAs that read codons beginning with uridine, leading to the formation of N6-(dimethylallyl)adenosine (i(6)A). In Roseiflexus sp. (strain RS-1), this protein is tRNA dimethylallyltransferase.